Here is a 152-residue protein sequence, read N- to C-terminus: Protein FERTILITY RESTORER RF2, mitochondrial (152 aa).

The N-terminal 52 residues, 1–52 (MSTLVTCSLPGAVTTHASTRRFGGSQFQTSQASCISFKREVSAKAVLRSVRC), are a transit peptide targeting the mitochondrion. Residues 52 to 69 (CNATQTQSAQRKSSTATV) are compositionally biased toward polar residues. The disordered stretch occupies residues 52–101 (CNATQTQSAQRKSSTATVKRSDPKGKTQGPKLDDGSGGFPPFRFGKGGGG).

Its subcellular location is the mitochondrion. Functionally, non-functional allele of the RF2 fertility restorer of rice varieties with LD-type cytoplasmic male sterility (CMS). Non-functional RF2 alleles are found in japonica cultivars Taichung 65 and Nipponbare (AC F1SZ44), and is due to the presence of Thr-78 which replaces Ile-78 in the functional allele. Functional allele is found in the japonica cultivars Fukuyama and Owarihatamochi (AC F1SZ42), and indica cultivar Kasalath (AC F1SZ41). The protein is Protein FERTILITY RESTORER RF2, mitochondrial of Oryza sativa subsp. japonica (Rice).